The primary structure comprises 403 residues: S-adenosylmethionine synthase (403 aa).

Residue histidine 17 participates in ATP binding. Position 19 (aspartate 19) interacts with Mg(2+). K(+) is bound at residue glutamate 45. L-methionine is bound by residues glutamate 58 and glutamine 104. The segment at 104 to 114 (QSPDIAQGVDT) is flexible loop. ATP is bound by residues 179-181 (DGK), 250-251 (KF), aspartate 259, 265-266 (RK), alanine 282, and lysine 286. Residue aspartate 259 participates in L-methionine binding. Lysine 290 lines the L-methionine pocket.

This sequence belongs to the AdoMet synthase family. In terms of assembly, homotetramer; dimer of dimers. The cofactor is Mg(2+). Requires K(+) as cofactor.

It is found in the cytoplasm. It carries out the reaction L-methionine + ATP + H2O = S-adenosyl-L-methionine + phosphate + diphosphate. It functions in the pathway amino-acid biosynthesis; S-adenosyl-L-methionine biosynthesis; S-adenosyl-L-methionine from L-methionine: step 1/1. Its function is as follows. Catalyzes the formation of S-adenosylmethionine (AdoMet) from methionine and ATP. The overall synthetic reaction is composed of two sequential steps, AdoMet formation and the subsequent tripolyphosphate hydrolysis which occurs prior to release of AdoMet from the enzyme. This Mycobacterium bovis (strain BCG / Pasteur 1173P2) protein is S-adenosylmethionine synthase.